A 259-amino-acid polypeptide reads, in one-letter code: Global transcriptional regulator CodY (259 aa).

The segment at 1 to 155 is GAF domain; sequence MALLQKTRII…GATVVGMEIL (155 aa). The segment at residues 203-222 is a DNA-binding region (H-T-H motif); it reads ASKIADRVGITRSVIVNALR. Residue Ser215 is modified to Phosphoserine.

It belongs to the CodY family.

It localises to the cytoplasm. Its function is as follows. DNA-binding global transcriptional regulator which is involved in the adaptive response to starvation and acts by directly or indirectly controlling the expression of numerous genes in response to nutrient availability. During rapid exponential growth, CodY is highly active and represses genes whose products allow adaptation to nutrient depletion. The chain is Global transcriptional regulator CodY from Bacillus velezensis (strain DSM 23117 / BGSC 10A6 / LMG 26770 / FZB42) (Bacillus amyloliquefaciens subsp. plantarum).